The chain runs to 504 residues: SPbeta prophage-derived uncharacterized protein YorI (504 aa).

The chain is SPbeta prophage-derived uncharacterized protein YorI (yorI) from Bacillus subtilis (strain 168).